A 150-amino-acid chain; its full sequence is Large ribosomal subunit protein bL9 (150 aa).

Belongs to the bacterial ribosomal protein bL9 family.

Functionally, binds to the 23S rRNA. The sequence is that of Large ribosomal subunit protein bL9 from Shewanella baltica (strain OS155 / ATCC BAA-1091).